Reading from the N-terminus, the 175-residue chain is Ribosome maturation factor RimM (175 aa).

A PRC barrel domain is found at 98–175 (EGEYYWHQLE…EMRVDWDADF (78 aa)).

Belongs to the RimM family. Binds ribosomal protein uS19.

Its subcellular location is the cytoplasm. Its function is as follows. An accessory protein needed during the final step in the assembly of 30S ribosomal subunit, possibly for assembly of the head region. Essential for efficient processing of 16S rRNA. May be needed both before and after RbfA during the maturation of 16S rRNA. It has affinity for free ribosomal 30S subunits but not for 70S ribosomes. This Pseudomonas aeruginosa (strain UCBPP-PA14) protein is Ribosome maturation factor RimM.